We begin with the raw amino-acid sequence, 66 residues long: Beta-toxin Chui3 (66 aa).

One can recognise an LCN-type CS-alpha/beta domain in the interval Lys1–Arg66. 4 disulfide bridges follow: Cys12-Cys65, Cys16-Cys41, Cys25-Cys46, and Cys29-Cys48.

Belongs to the long (4 C-C) scorpion toxin superfamily. Sodium channel inhibitor family. Beta subfamily. As to expression, expressed by the venom gland.

Its subcellular location is the secreted. Functionally, beta toxins bind voltage-independently at site-4 of sodium channels (Nav) and shift the voltage of activation toward more negative potentials thereby affecting sodium channel activation and promoting spontaneous and repetitive firing. Acts on human sodium channel Nav1.6/SCN8A. The sequence is that of Beta-toxin Chui3 from Centruroides huichol (Scorpion).